A 385-amino-acid polypeptide reads, in one-letter code: 8-amino-7-oxononanoate synthase (385 aa).

Arg-21 contacts substrate. 108 to 109 (GF) provides a ligand contact to pyridoxal 5'-phosphate. His-133 provides a ligand contact to substrate. Residues Ser-179, His-207, and Thr-233 each coordinate pyridoxal 5'-phosphate. Lys-236 bears the N6-(pyridoxal phosphate)lysine mark. Substrate is bound at residue Thr-352.

The protein belongs to the class-II pyridoxal-phosphate-dependent aminotransferase family. BioF subfamily. In terms of assembly, homodimer. It depends on pyridoxal 5'-phosphate as a cofactor.

The enzyme catalyses 6-carboxyhexanoyl-[ACP] + L-alanine + H(+) = (8S)-8-amino-7-oxononanoate + holo-[ACP] + CO2. It functions in the pathway cofactor biosynthesis; biotin biosynthesis. Catalyzes the decarboxylative condensation of pimeloyl-[acyl-carrier protein] and L-alanine to produce 8-amino-7-oxononanoate (AON), [acyl-carrier protein], and carbon dioxide. The sequence is that of 8-amino-7-oxononanoate synthase from Salmonella schwarzengrund (strain CVM19633).